A 604-amino-acid polypeptide reads, in one-letter code: Glucose oxidase 2 (604 aa).

A signal peptide spans 1 to 16; it reads MKLLGLLSGLVVVATA. Leu-49 and Thr-50 together coordinate FAD. Residue Asn-63 is glycosylated (N-linked (GlcNAc...) asparagine). Glu-70 provides a ligand contact to FAD. A glycan (N-linked (GlcNAc...) asparagine) is linked at Asn-109. The FAD site is built by Ser-123, Asn-127, Gly-128, and Ser-130. Cys-184 and Cys-226 form a disulfide bridge. A glycan (N-linked (GlcNAc...) asparagine) is linked at Asn-214. Val-270 provides a ligand contact to FAD. Asn-375, Asn-408, and Asn-517 each carry an N-linked (GlcNAc...) asparagine glycan. Residue His-536 is the Proton acceptor of the active site. Residues Arg-557 and Val-558 each contribute to the O2 site. 2 residues coordinate FAD: Gly-569 and Met-581. An N-linked (GlcNAc...) asparagine glycan is attached at Asn-600.

It belongs to the GMC oxidoreductase family. As to quaternary structure, homodimer. Requires FAD as cofactor.

It is found in the secreted. The protein resides in the cell wall. Its subcellular location is the cytoplasm. The protein localises to the extracellular space. It localises to the extracellular matrix. It carries out the reaction beta-D-glucose + O2 = D-glucono-1,5-lactone + H2O2. Functionally, glucose oxidase catalyzes the oxidation of beta-D-glucose to D-glucono-delta-lactone and hydrogen peroxide in the presence of molecular oxygen. D-glucono-delta-lactone is sequentially hydrolyzed by lactonase to D-gluconic acid, and the resulting hydrogen peroxide is hydrolyzed by catalase to oxygen and water. Acts as a key factor contributing to fungal disease of apple. The production of gluconic acid leads to host tissue acidification that enhances the expression of pectolytic enzymes and the establishment of conditions for necrotrophic development of P.expansum. This is Glucose oxidase 2 from Penicillium expansum (Blue mold rot fungus).